We begin with the raw amino-acid sequence, 997 residues long: Kinesin-like protein KIF19 (997 aa).

The 336-residue stretch at 11–346 folds into the Kinesin motor domain; it reads QLMVALRVRP…LTYAGRAKNI (336 aa). Position 104 to 111 (104 to 111) interacts with ATP; it reads GPTGCGKT. A coiled-coil region spans residues 361 to 388; it reads IAQYTSIIADLRGEIQRLKCKIDQQAGR. Residues 477–494 are compositionally biased toward basic and acidic residues; it reads EERRKESYTKEDSEKDSD. Disordered regions lie at residues 477-509, 665-704, 718-759, and 784-997; these read EERR…EVAS, KITP…GTDS, QVKS…SSEN, and AAQR…LQHN. A coiled-coil region spans residues 506–551; that stretch reads EVASARENIAALVGEQKKLRKEKLALEQRCRELRARGRRLEETLPR. The segment covering 683 to 697 has biased composition (polar residues); it reads KTLSSEAQRPQNNTL. The segment covering 750–759 has biased composition (low complexity); the sequence is INSSPESSEN. Polar residues-rich tracts occupy residues 835–851 and 950–959; these read TLQH…STGE and PNQNTGSGNP.

Belongs to the TRAFAC class myosin-kinesin ATPase superfamily. Kinesin family. In terms of tissue distribution, strongly expressed in the oviduct and trachea. Expressed in testis, lung, ovary and brain.

The protein resides in the cytoplasm. Its subcellular location is the cytoskeleton. It localises to the cell projection. It is found in the cilium. Its function is as follows. Plus end-directed microtubule-dependent motor protein that regulates the length of motile cilia by mediating depolymerization of microtubules at ciliary tips. This chain is Kinesin-like protein KIF19 (Kif19), found in Mus musculus (Mouse).